Consider the following 372-residue polypeptide: L-lysine 4-hydroxylase (372 aa).

Positions 176, 178, and 312 each coordinate Fe cation.

The protein belongs to the clavaminate synthase family. Fe(2+) is required as a cofactor.

It catalyses the reaction L-lysine + 2-oxoglutarate + O2 = (4R)-4-hydroxy-L-lysine + succinate + CO2. Alpha-ketoglutarate-dependent dioxygenase that in vitro catalyzes the regio- and stereoselective hydroxylation of L-lysine, leading to (4R)-4-hydroxy-L-lysine. In Flavobacterium sp. (strain CF136), this protein is L-lysine 4-hydroxylase.